The following is a 174-amino-acid chain: Large ribosomal subunit protein uL10 (174 aa).

The protein belongs to the universal ribosomal protein uL10 family. Part of the ribosomal stalk of the 50S ribosomal subunit. The N-terminus interacts with L11 and the large rRNA to form the base of the stalk. The C-terminus forms an elongated spine to which L12 dimers bind in a sequential fashion forming a multimeric L10(L12)X complex.

In terms of biological role, forms part of the ribosomal stalk, playing a central role in the interaction of the ribosome with GTP-bound translation factors. This Methylibium petroleiphilum (strain ATCC BAA-1232 / LMG 22953 / PM1) protein is Large ribosomal subunit protein uL10.